The following is a 493-amino-acid chain: Putative lon protease homolog (493 aa).

Residue 52–59 (GPPGVGKS) coordinates ATP.

It belongs to the peptidase S16 family.

The sequence is that of Putative lon protease homolog from Thermoplasma acidophilum (strain ATCC 25905 / DSM 1728 / JCM 9062 / NBRC 15155 / AMRC-C165).